The sequence spans 464 residues: Cysteine--tRNA ligase 1 (464 aa).

Cys-28 lines the Zn(2+) pocket. The short motif at 30 to 40 is the 'HIGH' region element; it reads VTIYDLCHIGH. The Zn(2+) site is built by Cys-209, His-234, and Glu-238. The short motif at 266-270 is the 'KMSKS' region element; sequence KMSKS. Residue Lys-269 participates in ATP binding.

It belongs to the class-I aminoacyl-tRNA synthetase family. In terms of assembly, monomer. It depends on Zn(2+) as a cofactor.

The protein localises to the cytoplasm. It catalyses the reaction tRNA(Cys) + L-cysteine + ATP = L-cysteinyl-tRNA(Cys) + AMP + diphosphate. The sequence is that of Cysteine--tRNA ligase 1 from Photobacterium profundum (strain SS9).